The chain runs to 457 residues: tRNA-2-methylthio-N(6)-dimethylallyladenosine synthase (457 aa).

An MTTase N-terminal domain is found at 3-120 (KKVYVKTFGC…LPQMIDARRA (118 aa)). The [4Fe-4S] cluster site is built by Cys12, Cys49, Cys83, Cys157, Cys161, and Cys164. A Radical SAM core domain is found at 143–377 (RVEGPSAFVS…QATIEENVAR (235 aa)). The TRAM domain maps to 380 to 447 (QSMVGKVERI…PHSLRGELVL (68 aa)).

It belongs to the methylthiotransferase family. MiaB subfamily. Monomer. Requires [4Fe-4S] cluster as cofactor.

Its subcellular location is the cytoplasm. It catalyses the reaction N(6)-dimethylallyladenosine(37) in tRNA + (sulfur carrier)-SH + AH2 + 2 S-adenosyl-L-methionine = 2-methylsulfanyl-N(6)-dimethylallyladenosine(37) in tRNA + (sulfur carrier)-H + 5'-deoxyadenosine + L-methionine + A + S-adenosyl-L-homocysteine + 2 H(+). Its function is as follows. Catalyzes the methylthiolation of N6-(dimethylallyl)adenosine (i(6)A), leading to the formation of 2-methylthio-N6-(dimethylallyl)adenosine (ms(2)i(6)A) at position 37 in tRNAs that read codons beginning with uridine. The protein is tRNA-2-methylthio-N(6)-dimethylallyladenosine synthase of Burkholderia cenocepacia (strain HI2424).